Reading from the N-terminus, the 62-residue chain is Venom peptide SjAPI-2 (62 aa).

Cystine bridges form between Cys4-Cys40, Cys14-Cys36, Cys18-Cys32, Cys22-Cys60, and Cys42-Cys54. Residues 4–60 enclose the TIL domain; that stretch reads CRISGEVFTWCGTTCPLTCENFRNPPKHCPQGCFVGCMCRRGLVRHRNGRCVRPPRC.

This sequence belongs to the serine protease inhibitor-like (TIL domain-containing) family. In terms of tissue distribution, expressed by the venom gland.

The protein localises to the secreted. In terms of biological role, serine protease inhibitor. The polypeptide is Venom peptide SjAPI-2 (Scorpiops jendeki (Scorpion)).